The primary structure comprises 555 residues: Glucosylglycerate phosphorylase (555 aa).

Aspartate 231 functions as the Nucleophile in the catalytic mechanism.

It belongs to the glycosyl hydrolase 13 family. Glucosylglycerate phosphorylase subfamily.

The catalysed reaction is (2R)-2-O-(alpha-D-glucopyranosyl)-glycerate + phosphate = (R)-glycerate + alpha-D-glucose 1-phosphate. Catalyzes the reversible phosphorolysis of glucosylglycerate into alpha-D-glucose 1-phosphate (Glc1P) and D-glycerate. May be a regulator of intracellular levels of glucosylglycerate, a compatible solute that primarily protects organisms facing salt stress and very specific nutritional constraints. Has a very strict substrate specificity. Cannot catalyze the phosphorolysis of sucrose or synthesize sucrose from Glc1P and D-fructose. The chain is Glucosylglycerate phosphorylase from Allomeiothermus silvanus (strain ATCC 700542 / DSM 9946 / NBRC 106475 / NCIMB 13440 / VI-R2) (Thermus silvanus).